We begin with the raw amino-acid sequence, 211 residues long: Guanylate kinase (211 aa).

Residues Gly-7 to Met-185 form the Guanylate kinase-like domain. Residue Gly-14–Gly-21 participates in ATP binding.

The protein belongs to the guanylate kinase family.

Its subcellular location is the cytoplasm. It carries out the reaction GMP + ATP = GDP + ADP. In terms of biological role, essential for recycling GMP and indirectly, cGMP. The protein is Guanylate kinase of Symbiobacterium thermophilum (strain DSM 24528 / JCM 14929 / IAM 14863 / T).